Reading from the N-terminus, the 528-residue chain is Facilitator of iron transport 1 (528 aa).

The first 18 residues, Met-1 to Gly-18, serve as a signal peptide directing secretion. Repeat copies occupy residues Ser-20 to Ser-98, Ser-99 to Ser-168, and Ser-169 to Ser-233. Positions Ser-20–Thr-274 are 4 X approximate tandem repeats. Disordered stretches follow at residues Ser-79–Ile-100, Ala-145–Thr-172, and Ala-214–Ser-234. Polar residues-rich tracts occupy residues Val-81–Asp-93 and Ala-145–Asp-163. Residues Ser-234–Thr-274 form a 1-4; truncated repeat. 12 repeat units span residues Ser-289 to Ser-294, Ser-295 to Ser-300, Ser-301 to Ser-306, Ser-307 to Ser-312, Ser-313 to Ser-318, Ser-319 to Ser-324, Ser-325 to Ser-330, Ser-331 to Ser-336, Ser-337 to Ser-342, Ser-343 to Ser-348, Ser-349 to Thr-353, and Ser-354 to Ser-359. Residues Ser-289–Ser-359 form a 12 X 6 AA approximate tandem repeats, Ser/Thr-rich region. Composition is skewed to low complexity over residues Glu-298–Ser-388 and Thr-398–Thr-435. A disordered region spans residues Glu-298–Ala-471. Asn-412 carries N-linked (GlcNAc...) asparagine glycosylation. A compositionally biased stretch (polar residues) spans Tyr-446–Val-457. Low complexity predominate over residues Ser-462–Ala-471. Asn-464 carries an N-linked (GlcNAc...) asparagine glycan. Gly-488 to Ser-495 is a binding site for ATP. Asn-503 carries an N-linked (GlcNAc...) asparagine glycan. Gly-506 carries the GPI-anchor amidated glycine lipid modification. Positions Ala-507–Leu-528 are cleaved as a propeptide — removed in mature form.

In terms of processing, the GPI-anchor is attached to the protein in the endoplasmic reticulum and serves to target the protein to the cell surface. There, the glucosamine-inositol phospholipid moiety is cleaved off and the GPI-modified mannoprotein is covalently attached via its lipidless GPI glycan remnant to the 1,6-beta-glucan of the outer cell wall layer.

Its subcellular location is the secreted. It localises to the cell wall. It is found in the membrane. Involved in the uptake of non-siderophore sources of iron and the siderophores ferrioxamine B and ferrichrome. Has a role in the retention of iron in the cell wall and periplasmic space. This Saccharomyces cerevisiae (strain ATCC 204508 / S288c) (Baker's yeast) protein is Facilitator of iron transport 1 (FIT1).